A 615-amino-acid chain; its full sequence is Dihydroxy-acid dehydratase (615 aa).

D81 is a binding site for Mg(2+). C122 contributes to the [2Fe-2S] cluster binding site. Mg(2+) contacts are provided by D123 and K124. K124 bears the N6-carboxylysine mark. [2Fe-2S] cluster is bound at residue C197. E494 provides a ligand contact to Mg(2+). Catalysis depends on S520, which acts as the Proton acceptor.

The protein belongs to the IlvD/Edd family. In terms of assembly, homodimer. [2Fe-2S] cluster serves as cofactor. Requires Mg(2+) as cofactor.

It carries out the reaction (2R)-2,3-dihydroxy-3-methylbutanoate = 3-methyl-2-oxobutanoate + H2O. It catalyses the reaction (2R,3R)-2,3-dihydroxy-3-methylpentanoate = (S)-3-methyl-2-oxopentanoate + H2O. It functions in the pathway amino-acid biosynthesis; L-isoleucine biosynthesis; L-isoleucine from 2-oxobutanoate: step 3/4. It participates in amino-acid biosynthesis; L-valine biosynthesis; L-valine from pyruvate: step 3/4. Functionally, functions in the biosynthesis of branched-chain amino acids. Catalyzes the dehydration of (2R,3R)-2,3-dihydroxy-3-methylpentanoate (2,3-dihydroxy-3-methylvalerate) into 2-oxo-3-methylpentanoate (2-oxo-3-methylvalerate) and of (2R)-2,3-dihydroxy-3-methylbutanoate (2,3-dihydroxyisovalerate) into 2-oxo-3-methylbutanoate (2-oxoisovalerate), the penultimate precursor to L-isoleucine and L-valine, respectively. The polypeptide is Dihydroxy-acid dehydratase (Salinispora arenicola (strain CNS-205)).